Consider the following 541-residue polypeptide: Formimidoyltransferase-cyclodeaminase (541 aa).

Positions 1-181 (MSQLVECVPN…GATVTGARKF (181 aa)) are formiminotransferase N-subdomain. H82 (for formimidoyltransferase activity) is an active-site residue. Position 163-172 (163-172 (GPSSFVPSWG)) interacts with folate. The interval 182–326 (LIAFNINLLS…PKERIIEYLV (145 aa)) is formiminotransferase C-subdomain. The tract at residues 327 to 334 (PDSGPEQS) is linker. Positions 335–541 (LLDTSLRGFV…VLGSLEARKE (207 aa)) are cyclodeaminase/cyclohydrolase. D412 (for cyclodeaminase activity) is an active-site residue. A Phosphoserine modification is found at S520.

In the C-terminal section; belongs to the cyclodeaminase/cyclohydrolase family. This sequence in the N-terminal section; belongs to the formiminotransferase family. As to quaternary structure, homooctamer, including four polyglutamate binding sites. The subunits are arranged as a tetramer of dimers, and form a planar ring-shaped structure.

Its subcellular location is the cytoplasm. The protein localises to the cytoskeleton. It localises to the microtubule organizing center. It is found in the centrosome. The protein resides in the centriole. Its subcellular location is the golgi apparatus. The enzyme catalyses 5-formimidoyltetrahydrofolate + L-glutamate = N-formimidoyl-L-glutamate + (6S)-5,6,7,8-tetrahydrofolate. It carries out the reaction (6S)-5-formyl-5,6,7,8-tetrahydrofolate + L-glutamate = N-formyl-L-glutamate + (6S)-5,6,7,8-tetrahydrofolate + H(+). The catalysed reaction is 5-formimidoyltetrahydrofolate + 2 H(+) = (6R)-5,10-methenyltetrahydrofolate + NH4(+). Its pathway is amino-acid degradation; L-histidine degradation into L-glutamate; L-glutamate from N-formimidoyl-L-glutamate (transferase route): step 1/1. It functions in the pathway one-carbon metabolism; tetrahydrofolate interconversion. Folate-dependent enzyme, that displays both transferase and deaminase activity. Serves to channel one-carbon units from formiminoglutamate to the folate pool. In terms of biological role, binds and promotes bundling of vimentin filaments originating from the Golgi. The protein is Formimidoyltransferase-cyclodeaminase (Ftcd) of Mus musculus (Mouse).